Consider the following 125-residue polypeptide: Small ribosomal subunit protein uS12 (125 aa).

Asp-89 carries the 3-methylthioaspartic acid modification.

The protein belongs to the universal ribosomal protein uS12 family. In terms of assembly, part of the 30S ribosomal subunit. Contacts proteins S8 and S17. May interact with IF1 in the 30S initiation complex.

Its function is as follows. With S4 and S5 plays an important role in translational accuracy. Functionally, interacts with and stabilizes bases of the 16S rRNA that are involved in tRNA selection in the A site and with the mRNA backbone. Located at the interface of the 30S and 50S subunits, it traverses the body of the 30S subunit contacting proteins on the other side and probably holding the rRNA structure together. The combined cluster of proteins S8, S12 and S17 appears to hold together the shoulder and platform of the 30S subunit. This is Small ribosomal subunit protein uS12 from Clostridium novyi (strain NT).